Consider the following 232-residue polypeptide: Alpha N-terminal protein methyltransferase 1 (232 aa).

S-adenosyl-L-methionine-binding positions include G71, R76, 123–124 (MQ), and Q139.

It belongs to the methyltransferase superfamily. NTM1 family.

The protein localises to the cytoplasm. It catalyses the reaction N-terminal L-alanyl-L-prolyl-L-lysyl-[protein] + 3 S-adenosyl-L-methionine = N-terminal N,N,N-trimethyl-L-alanyl-L-prolyl-L-lysyl-[protein] + 3 S-adenosyl-L-homocysteine + 3 H(+). The catalysed reaction is N-terminal L-seryl-L-prolyl-L-lysyl-[protein] + 3 S-adenosyl-L-methionine = N-terminal N,N,N-trimethyl-L-seryl-L-prolyl-L-lysyl-[protein] + 3 S-adenosyl-L-homocysteine + 3 H(+). The enzyme catalyses N-terminal L-prolyl-L-prolyl-L-lysyl-[protein] + 2 S-adenosyl-L-methionine = N-terminal N,N-dimethyl-L-prolyl-L-prolyl-L-lysyl-[protein] + 2 S-adenosyl-L-homocysteine + 2 H(+). Alpha-N-methyltransferase that methylates the N-terminus of target proteins containing the N-terminal motif [Ala/Pro/Ser]-Pro-Lys when the initiator Met is cleaved. Specifically catalyzes mono-, di- or tri-methylation of exposed alpha-amino group of Ala or Ser residue in the [Ala/Ser]-Pro-Lys motif and mono- or di-methylation of Pro in the Pro-Pro-Lys motif. Responsible for the N-terminal methylation of the ribosomal proteins RPL12A, RPL12B, RPS25A and RPS25B. The sequence is that of Alpha N-terminal protein methyltransferase 1 (TAE1) from Saccharomyces cerevisiae (strain ATCC 204508 / S288c) (Baker's yeast).